Here is a 149-residue protein sequence, read N- to C-terminus: Ribonuclease H (149 aa).

An RNase H type-1 domain is found at 1 to 145; it reads MKKVIIYTDG…CDKLANEAMD (145 aa). Mg(2+) is bound by residues Asp-9, Glu-50, Asp-72, and Asp-137.

Belongs to the RNase H family. Monomer. The cofactor is Mg(2+).

The protein localises to the cytoplasm. It catalyses the reaction Endonucleolytic cleavage to 5'-phosphomonoester.. Endonuclease that specifically degrades the RNA of RNA-DNA hybrids. In Clostridium botulinum (strain ATCC 19397 / Type A), this protein is Ribonuclease H.